A 257-amino-acid polypeptide reads, in one-letter code: Major prion protein (257 aa).

The first 24 residues, 1–24 (MVKSHIGGWILVLFVAAWSDIGLC), serve as a signal peptide directing secretion. Residues 25-234 (KKRPKPGGGW…EYEAYAQRGA (210 aa)) form an interaction with GRB2, ERI3 and SYN1 region. The interval 28-113 (PKPGGGWNTG…NKPSKPKTNM (86 aa)) is disordered. Repeat copies occupy residues 54–62 (PQGGGGWGQ), 63–70 (PHGGGWGQ), 71–78 (PHGGGWGQ), 79–86 (PHGGGWGQ), and 87–95 (PHGGGGWGQ). The segment at 54-95 (PQGGGGWGQPHGGGWGQPHGGGWGQPHGGGWGQPHGGGGWGQ) is 5 X 8 AA tandem repeats of P-H-G-G-G-W-G-Q. The segment covering 55–100 (QGGGGWGQPHGGGWGQPHGGGWGQPHGGGWGQPHGGGGWGQGGGSH) has biased composition (gly residues). Cu(2+)-binding residues include H64, G65, G66, H72, G73, G74, H80, G81, G82, H88, G90, and G91. The cysteines at positions 183 and 218 are disulfide-linked. 2 N-linked (GlcNAc...) asparagine glycosylation sites follow: N185 and N201. The GPI-anchor amidated alanine moiety is linked to residue A234. Residues 235 to 257 (SVILFSSPPVILLISFLLFLIVG) constitute a propeptide, removed in mature form.

The protein belongs to the prion family. As to quaternary structure, monomer and homodimer. Has a tendency to aggregate into amyloid fibrils containing a cross-beta spine, formed by a steric zipper of superposed beta-strands. Soluble oligomers may represent an intermediate stage on the path to fibril formation. Copper binding may promote oligomerization. Interacts with GRB2, APP, ERI3/PRNPIP and SYN1. Mislocalized cytosolically exposed PrP interacts with MGRN1; this interaction alters MGRN1 subcellular location and causes lysosomal enlargement. Interacts with KIAA1191.

It is found in the cell membrane. The protein localises to the golgi apparatus. In terms of biological role, its primary physiological function is unclear. Has cytoprotective activity against internal or environmental stresses. May play a role in neuronal development and synaptic plasticity. May be required for neuronal myelin sheath maintenance. May play a role in iron uptake and iron homeostasis. Soluble oligomers are toxic to cultured neuroblastoma cells and induce apoptosis (in vitro). Association with GPC1 (via its heparan sulfate chains) targets PRNP to lipid rafts. Also provides Cu(2+) or Zn(2+) for the ascorbate-mediated GPC1 deaminase degradation of its heparan sulfate side chains. This chain is Major prion protein (PRNP), found in Sus scrofa (Pig).